The sequence spans 3021 residues: Genome polyprotein (3021 aa).

An N-acetylserine; by host modification is found at S2. Residues 2–23 (STLPKPQRKTKRNTIRRPQDVK) form an interaction with STAT1 region. The interval 2–58 (STLPKPQRKTKRNTIRRPQDVKFPGGGVIYVGVYVLPRRGPRLGVRATRKTSERSQP) is interaction with EIF2AK2/PKR. The interaction with DDX3X stretch occupies residues 2–59 (STLPKPQRKTKRNTIRRPQDVKFPGGGVIYVGVYVLPRRGPRLGVRATRKTSERSQPR). Residues 2–75 (STLPKPQRKT…PKARRSEGRS (74 aa)) are disordered. Topologically, residues 2–168 (STLPKPQRKT…EDGINFATGN (167 aa)) are cytoplasmic. Short sequence motifs (nuclear localization signal) lie at residues 5-13 (PKPQRKTKR) and 38-43 (PRRGPR). Basic residues predominate over residues 7–16 (PQRKTKRNTI). The residue at position 53 (S53) is a Phosphoserine; by host. 2 consecutive short sequence motifs (nuclear localization signal) follow at residues 58–64 (PRGRRKP) and 66–71 (PKARRS). Basic residues predominate over residues 58–68 (PRGRRKPIPKA). Phosphoserine; by host is present on residues S99 and S116. Residues 112–152 (PRRRSRNLGKVIDTLTCGFADLMGYIPLVGAPLGGAARALA) form an important for endoplasmic reticulum and mitochondrial localization region. The interaction with APOA2 stretch occupies residues 122-173 (VIDTLTCGFADLMGYIPLVGAPLGGAARALAHGVRALEDGINFATGNLPGCS). Positions 164 to 167 (FATG) are important for lipid droplets localization. A helical membrane pass occupies residues 169 to 189 (LPGCSFSIFLLALFSCLIHPA). Positions 178–191 (LLALFSCLIHPAAS) are cleaved as a propeptide — ER anchor for the core protein, removed in mature form by host signal peptidase. At 190-358 (ASLEWRNTSG…AGAHWGIIAG (169 aa)) the chain is on the lumenal side. 3 N-linked (GlcNAc...) asparagine; by host glycosylation sites follow: N196, N209, and N234. The tract at residues 265 to 296 (LVGAGTMCSALYVGDMCGPVFLVGQAFTFRPR) is important for fusion. N-linked (GlcNAc...) asparagine; by host glycosylation occurs at N305. A helical transmembrane segment spans residues 359 to 379 (LAYYSMQGNWAKVAIIMVMFS). Residues 380 to 731 (GVDASTHVTA…WEFVILIFLL (352 aa)) are Lumenal-facing. Residues 385-412 (THVTAGQAARNAYGITSLFSVGAKQNLQ) are HVR1. 3 N-linked (GlcNAc...) (high mannose) asparagine; by host glycosylation sites follow: N417, N423, and N430. Disulfide bonds link C429–C553, C452–C459, C487–C495, and C504–C509. The N-linked (GlcNAc...) asparagine; by host glycan is linked to N448. An HVR2 region spans residues 475–479 (ANITG). N-linked (GlcNAc...) asparagine; by host glycosylation occurs at N476. The tract at residues 481–494 (SDDKPYCWHYAPRP) is CD81-binding 1. N533 is a glycosylation site (N-linked (GlcNAc...) asparagine; by host). The interval 545–552 (PPSGRWFG) is CD81-binding 2. N-linked (GlcNAc...) asparagine; by host glycosylation is present at N557. 4 disulfide bridges follow: C565–C570, C587–C591, C603–C626, and C613–C650. Residues N629 and N651 are each glycosylated (N-linked (GlcNAc...) (high mannose) asparagine; by host). A disulfide bridge links C658 with C683. Residues 666–677 (SEQHPLLHSTTE) form a PKR/eIF2-alpha phosphorylation homology domain (PePHD) region. The helical transmembrane segment at 732–752 (LADARVCVALWLILTISQAEA) threads the bilayer. Residues 753–763 (ALENLVTLNAV) are Lumenal-facing. A helical membrane pass occupies residues 764-784 (AAAGTHGIGWYLVAFCAAWYV). At 785–787 (RGK) the chain is on the cytoplasmic side. A helical transmembrane segment spans residues 788–809 (LVPLVTYSLTGLWSLALLVLLL). The Lumenal segment spans residues 810-819 (PQRAYAWSGE). A helical membrane pass occupies residues 820–840 (DSATLGAGILVLFGFFTLSPW). Residues 841 to 844 (YKHW) lie on the Cytoplasmic side of the membrane. The chain crosses the membrane as a helical span at residues 845-864 (IARLIWWNQYTICRCESALH). Topologically, residues 865–887 (VWVPPLLARGGRDGVILLTSLLY) are lumenal. The chain crosses the membrane as a helical span at residues 888–908 (PSLIFDITKLLIAALGPLYLI). Residues 905-1032 (LYLIQATITA…DYREMGWRLL (128 aa)) enclose the Peptidase C18 domain. The Cytoplasmic portion of the chain corresponds to 909 to 1663 (QATITATPYF…CMSADLEVTT (755 aa)). A protease NS2-3 region spans residues 910–1212 (ATITATPYFV…PVETLSTQAR (303 aa)). C928 carries S-palmitoyl cysteine; by host lipidation. Positions 935 to 955 (MGGKYFQMIILSLADGSNTYL) are interaction with host SCPS1. Active-site for protease NS2 activity; shared with dimeric partner residues include H958, E978, and C999. The Peptidase S29 domain maps to 1033–1214 (APITAYAQQT…ETLSTQARSP (182 aa)). Active-site charge relay system; for serine protease NS3 activity residues include H1089 and D1113. C1129 and C1131 together coordinate Zn(2+). Catalysis depends on S1171, which acts as the Charge relay system; for serine protease NS3 activity. Residues C1177 and H1181 each contribute to the Zn(2+) site. Residues 1223-1375 (PAVPQSYQVG…SNIEEVALGS (153 aa)) form the Helicase ATP-binding domain. 1236–1243 (APTGSGKS) contributes to the ATP binding site. S1243 serves as a coordination point for Mg(2+). A DECH box motif is present at residues 1322 to 1325 (DDCH). In terms of domain architecture, Helicase C-terminal spans 1382 to 1544 (YGKAIPIACI…DLQPAETTVR (163 aa)). The RNA-binding stretch occupies residues 1492 to 1504 (QRRGRTGRGRLGT). The helical transmembrane segment at 1664 to 1684 (STWVLLGGVLAAVAAYCLSVG) threads the bilayer. Residues 1685–1696 (CVVIVGHIELGG) are NS3-binding. Residues 1685 to 1811 (CVVIVGHIEL…SVTSPLTTNQ (127 aa)) lie on the Cytoplasmic side of the membrane. Residues 1812–1830 (TMFFNILGGWVATHLAGPQ) form a helical membrane-spanning segment. The Lumenal segment spans residues 1831-1834 (ASSA). Residues 1835 to 1855 (FVVSGLAGAAIGGIGLGRVLL) traverse the membrane as a helical segment. A topological domain (cytoplasmic) is located at residue D1856. The chain crosses the membrane as a helical span at residues 1857–1877 (ILAGYGAGVSGALVAFKIMGG). The Lumenal segment spans residues 1878 to 1887 (EPPTTEDMVN). Residues 1888-1908 (LLPAILSPGALVVGVICAAIL) form a helical membrane-spanning segment. At 1909–1978 (RRHVGPGEGP…WINEDYPSPC (70 aa)) the chain is on the cytoplasmic side. A lipid anchor (S-palmitoyl cysteine; by host) is attached at C1978. An intramembrane segment occupies 1979–2008 (SGDWLRIIWDWVCSVVSDFKTWLSAKIMPA). Over 2009–3000 (LPGLPFISCQ…YHSVSRARTR (992 aa)) the chain is Cytoplasmic. Positions 2017, 2035, 2037, and 2058 each coordinate Zn(2+). The tract at residues 2126–2214 (EFFTEVDGVR…ASSSASQLSA (89 aa)) is FKBP8-binding. The transcriptional activation stretch occupies residues 2126 to 2338 (EFFTEVDGVR…PVPPPRRKRT (213 aa)). The interaction with non-structural protein 4A stretch occupies residues 2141–2145 (PPCRP). A disordered region spans residues 2193 to 2215 (ARRLARGSPPSEASSSASQLSAP). An interaction with host SKP2 region spans residues 2195-2448 (RLARGSPPSE…ALITPCSAEE (254 aa)). A phosphoserine; by host mark is found at S2200, S2203, S2207, S2210, S2213, and S2216. The segment covering 2200–2215 (SPPSEASSSASQLSAP) has biased composition (low complexity). The ISDR stretch occupies residues 2216-2255 (SLKATCQTHRPHPDAELVDANLLWRQEMGSNITRVESETK). The tract at residues 2216-2281 (SLKATCQTHR…AELSAAAECF (66 aa)) is interaction with EIF2AK2/PKR. Positions 2255–2312 (KVVILDSFEPLRAETDDAELSAAAECFKKPPKYPPALPIWARPDYNPPLLDRWKSPDY) are NS4B-binding. Positions 2305–2383 (DRWKSPDYVP…DTQSSTASKV (79 aa)) are V3. Disordered stretches follow at residues 2318–2338 (HGCALPPKGAPPVPPPRRKRT) and 2356–2419 (KSFP…WSTV). The short motif at 2328-2331 (PPVP) is the SH3-binding element. Positions 2333 to 2341 (PRRKRTIQL) match the Nuclear localization signal motif. Residue K2356 forms a Glycyl lysine isopeptide (Lys-Gly) (interchain with G-Cter in ubiquitin) linkage. Residues 2359–2381 (PSSKPQEENSSSSGVDTQSSTAS) show a composition bias toward low complexity. S2459 and S2472 each carry phosphoserine; by host. Residues 2644 to 2762 (PLGFSYDTRC…VAESDGVDED (119 aa)) form the RdRp catalytic domain. Positions 2650, 2748, and 2749 each coordinate Mg(2+). The chain crosses the membrane as a helical span at residues 3001-3021 (YLLLCLLLLTVGVGIFLLPAR).

Belongs to the hepacivirus polyprotein family. In terms of assembly, homooligomer. Interacts with E1 (via C-terminus). Interacts with the non-structural protein 5A. Interacts (via N-terminus) with host STAT1 (via SH2 domain); this interaction results in decreased STAT1 phosphorylation and ubiquitin-mediated proteasome-dependent STAT1 degradation, leading to decreased IFN-stimulated gene transcription. Interacts with host STAT3; this interaction constitutively activates STAT3. Interacts with host LTBR receptor. Interacts with host TNFRSF1A receptor and possibly induces apoptosis. Interacts with host HNRPK. Interacts with host YWHAE. Interacts with host UBE3A/E6AP. Interacts with host DDX3X. Interacts with host APOA2. Interacts with host RXRA protein. Interacts with host SP110 isoform 3/Sp110b; this interaction sequesters the transcriptional corepressor SP110 away from the nucleus. Interacts with host CREB3 nuclear transcription protein; this interaction triggers cell transformation. Interacts with host ACY3. Interacts with host C1QR1. Interacts with host RBM24; this interaction, which enhances the interaction of the mature core protein with 5'-UTR, may inhibit viral translation and favor replication. Interacts with host EIF2AK2/PKR; this interaction induces the autophosphorylation of EIF2AK2. Part of the viral assembly initiation complex composed of NS2, E1, E2, NS3, NS4A, NS5A and the mature core protein. Forms a heterodimer with envelope glycoprotein E2. Interacts with mature core protein. Interacts with protease NS2. The heterodimer E1/E2 interacts with host CLDN1; this interaction plays a role in viral entry into host cell. Interacts with host SPSB2 (via C-terminus). Part of the viral assembly initiation complex composed of NS2, E1, E2, NS3, NS4A, NS5A and the mature core protein. Interacts with host NEURL3; this interaction prevents E1 binding to glycoprotein E2. As to quaternary structure, forms a heterodimer with envelope glycoprotein E1. Interacts with host CD81 and SCARB1 receptors; these interactions play a role in viral entry into host cell. Interacts with host EIF2AK2/PKR; this interaction inhibits EIF2AK2 and probably allows the virus to evade the innate immune response. Interacts with host CD209/DC-SIGN and CLEC4M/DC-SIGNR. Interact with host SPCS1; this interaction is essential for viral particle assembly. Interacts with protease NS2. The heterodimer E1/E2 interacts with host CLDN1; this interaction plays a role in viral entry into host cell. Part of the viral assembly initiation complex composed of NS2, E1, E2, NS3, NS4A, NS5A and the mature core protein. Interacts with host SLC3A2/4F2hc; the interaction may facilitate viral entry into host cell. Interacts with human PLSCR1. In terms of assembly, homohexamer. Homoheptamer. Interacts with protease NS2. Homodimer. Interacts with host SPCS1; this interaction is essential for viral particle assembly. Interacts with envelope glycoprotein E1. Interacts with envelope glycoprotein E2. Interacts with viroporin p7. Interacts with serine protease/helicase NS3. Part of the replication complex composed of NS2, NS3, NS4A, NS4B, NS5A and the RNA-directed RNA polymerase embedded in an ER-derived membranous web. Part of the viral assembly initiation complex composed of NS2, E1, E2, NS3, NS4A, NS5A and the mature core protein. As to quaternary structure, interacts with protease NS2. Interacts with non-structural protein 4A; this interaction stabilizes the folding of NS3 serine protease. NS3-NS4A interaction is essential for NS3 activation and allows membrane anchorage of the latter. NS3/NS4A complex also prevents phosphorylation of host IRF3, thus preventing the establishment of dsRNA induced antiviral state. Interacts with host MAVS; this interaction leads to the cleavage and inhibition of host MAVS. Interacts with host TICAM1; this interaction leads to the cleavage and inhibition of host TICAM1. Interacts with host TANK-binding kinase/TBK1; this interaction results in the inhibition of the association between TBK1 and IRF3, which leads to the inhibition of IRF3 activation. Interacts with host RBM24. Part of the replication complex composed of NS2, NS3, NS4A, NS4B, NS5A and the RNA-directed RNA polymerase embedded in an ER-derived membranous web. Part of the viral assembly initiation complex composed of NS2, E1, E2, NS3, NS4A, NS5A and the mature core protein. In terms of assembly, interacts with NS3 serine protease; this interaction stabilizes the folding of NS3 serine protease. NS3-NS4A interaction is essential for NS3 activation and allows membrane anchorage of the latter. Interacts with non-structural protein 5A (via N-terminus). Part of the replication complex composed of NS2, NS3, NS4A, NS4B, NS5A and the RNA-directed RNA polymerase embedded in an ER-derived membranous web. Part of the viral assembly initiation complex composed of NS2, E1, E2, NS3, NS4A, NS5A and the mature core protein. Homomultimer. Interacts with non-structural protein NS5A. Interacts with host PLA2G4C; this interaction likely initiates the recruitment of replication complexes to lipid droplets. Interacts with host STING; this interaction disrupts the interaction between STING and TBK1 thereby suppressing the interferon signaling. Part of the replication complex composed of NS2, NS3, NS4A, NS4B, NS5A and the RNA-directed RNA polymerase embedded in an ER-derived membranous web. As to quaternary structure, monomer. Homodimer; dimerization is required for RNA-binding. Interacts with the mature core protein. Interacts (via N-terminus) with non-structural protein 4A. Interacts with non-structural protein 4B. Interacts (via region D2) with RNA-directed RNA polymerase. Part of the viral assembly initiation complex composed of NS2, E1, E2, NS3, NS4A, NS5A and the mature core protein. Part of the replication complex composed of NS2, NS3, NS4A, NS4B, NS5A and the RNA-directed RNA polymerase embedded in an ER-derived membranous web. Interacts with host GRB2. Interacts with host BIN1. Interacts with host PIK3R1. Interacts with host SRCAP. Interacts with host FKBP8. Interacts (via C-terminus) with host VAPB (via MSP domain). Interacts with host EIF2AK2/PKR; this interaction leads to disruption of EIF2AK2 dimerization by NS5A and probably allows the virus to evade the innate immune response. Interacts (via N-terminus) with host PACSIN2 (via N-terminus); this interaction attenuates protein kinase C alpha-mediated phosphorylation of PACSIN2 by disrupting the interaction between PACSIN2 and PRKCA. Interacts (via N-terminus) with host SRC kinase (via SH2 domain). Interacts with most Src-family kinases. Interacts with host IFI27 and SKP2; promotes the ubiquitin-mediated proteasomal degradation of NS5A. Interacts with host GPS2. Interacts with host TNFRSF21; this interaction allows the modulation by the virus of JNK, p38 MAPK, STAT3, and Akt signaling pathways in a DR6-dependent manner. Interacts (via N-terminus) with host CIDEB (via N-terminus); this interaction seems to regulate the association of HCV particles with APOE. Interacts with host CHKA/Choline Kinase-alpha; CHKA bridges host PI4KA and NS5A and potentiates NS5A-stimulated PI4KA activity, which then facilitates the targeting of the ternary complex to the ER for viral replication. Interacts with host SPSB2 (via C-terminus); this interaction targets NS5A for ubiquitination and degradation. Interacts with host RAB18; this interaction may promote the association of NS5A and other replicase components with lipid droplets. Interacts (via region D2) with host PPIA/CYPA; the interaction stimulates RNA-binding ability of NS5A and is dependent on the peptidyl-prolyl cis-trans isomerase activity of PPIA/CYPA. Interacts with host TRIM14; this interaction induces the degradation of NS5A. In terms of assembly, homooligomer. Interacts with non-structural protein 5A. Interacts with host VAPB. Interacts with host PRK2/PKN2. Interacts with host HNRNPA1 and SEPT6; these interactions facilitate viral replication. Part of the replication complex composed of NS2, NS3, NS4A, NS4B, NS5A and the RNA-directed RNA polymerase. Zn(2+) serves as cofactor. Mg(2+) is required as a cofactor. Specific enzymatic cleavages in vivo yield mature proteins. The structural proteins, core, E1, E2 and p7 are produced by proteolytic processing by host signal peptidases. The core protein precursor is synthesized as a 23 kDa, which is retained in the ER membrane through the hydrophobic signal peptide. Cleavage by the signal peptidase releases the 21 kDa mature core protein. The cleavage of the core protein precursor occurs between aminoacids 176 and 188 but the exact cleavage site is not known. Some degraded forms of the core protein appear as well during the course of infection. The other proteins (p7, NS2, NS3, NS4A, NS4B, NS5A and NS5B) are cleaved by the viral proteases. Autoprocessing between NS2 and NS3 is mediated by the NS2 cysteine protease catalytic domain and regulated by the NS3 N-terminal domain. In terms of processing, phosphorylated by host PKC and PKA. Post-translationally, ubiquitinated; mediated by UBE3A and leading to core protein subsequent proteasomal degradation. Highly N-glycosylated. In terms of processing, palmitoylation is required for NS2/3 autoprocessing and E2 recruitment to membranes. Post-translationally, palmitoylated. This modification may play a role in its polymerization or in protein-protein interactions. Phosphorylated on serines in a basal form termed p56. p58 is a hyperphosphorylated form of p56. p56 and p58 coexist in the cell in roughly equivalent amounts. Hyperphosphorylation is dependent on the presence of NS4A. Host CSNK1A1/CKI-alpha or RPS6KB1 kinases may be responsible for NS5A phosphorylation. In terms of processing, tyrosine phosphorylation is essential for the interaction with host SRC. Post-translationally, ubiquitinated. Ubiquitination, most probably at Lys-2356, mediated by host IFI27 and SKP2 leads to proteasomal degradation, restricting viral infection. Ubiquitination by host TRIM22 leads to interruption of viral replication. The N-terminus is phosphorylated by host PRK2/PKN2.

The protein localises to the host endoplasmic reticulum membrane. The protein resides in the host mitochondrion membrane. Its subcellular location is the virion. It is found in the host cytoplasm. It localises to the host nucleus. The protein localises to the host lipid droplet. The protein resides in the virion membrane. Its subcellular location is the host mitochondrion. It is found in the host cell membrane. It localises to the host perinuclear region. It catalyses the reaction Hydrolysis of four peptide bonds in the viral precursor polyprotein, commonly with Asp or Glu in the P6 position, Cys or Thr in P1 and Ser or Ala in P1'.. It carries out the reaction a ribonucleoside 5'-triphosphate + H2O = a ribonucleoside 5'-diphosphate + phosphate + H(+). The enzyme catalyses ATP + H2O = ADP + phosphate + H(+). The catalysed reaction is RNA(n) + a ribonucleoside 5'-triphosphate = RNA(n+1) + diphosphate. Its activity is regulated as follows. Inhibited by the antiviral drug hexamethylene amiloride. Inhibition by amantadine appears to be genotype-dependent. Also inhibited by long-alkyl-chain iminosugar derivatives. With respect to regulation, activity is up-regulated by PRK2/PKN2-mediated phosphorylation. Functionally, packages viral RNA to form a viral nucleocapsid, and promotes virion budding. Participates in the viral particle production as a result of its interaction with the non-structural protein 5A. Binds RNA and may function as a RNA chaperone to induce the RNA structural rearrangements taking place during virus replication. Modulates viral translation initiation by interacting with viral IRES and 40S ribosomal subunit. Affects various cell signaling pathways, host immunity and lipid metabolism. Prevents the establishment of cellular antiviral state by blocking the interferon-alpha/beta (IFN-alpha/beta) and IFN-gamma signaling pathways and by blocking the formation of phosphorylated STAT1 and promoting ubiquitin-mediated proteasome-dependent degradation of STAT1. Activates STAT3 leading to cellular transformation. Regulates the activity of cellular genes, including c-myc and c-fos. May repress the promoter of p53, and sequester CREB3 and SP110 isoform 3/Sp110b in the cytoplasm. Represses cell cycle negative regulating factor CDKN1A, thereby interrupting an important check point of normal cell cycle regulation. Targets transcription factors involved in the regulation of inflammatory responses and in the immune response: suppresses TNF-induced NF-kappa-B activation, and activates AP-1. Binds to dendritic cells (DCs) via C1QR1, resulting in down-regulation of T-lymphocytes proliferation. Alters lipid metabolism by interacting with hepatocellular proteins involved in lipid accumulation and storage. Induces up-regulation of FAS promoter activity, and thereby contributes to the increased triglyceride accumulation in hepatocytes (steatosis). Forms a heterodimer with envelope glycoprotein E2, which mediates virus attachment to the host cell, virion internalization through clathrin-dependent endocytosis and fusion with host membrane. Fusion with the host cell is most likely mediated by both E1 and E2, through conformational rearrangements of the heterodimer required for fusion rather than a classical class II fusion mechanism. E1/E2 heterodimer binds host apolipoproteins such as APOB and ApoE thereby forming a lipo-viro-particle (LVP). APOE associated to the LVP allows the initial virus attachment to cell surface receptors such as the heparan sulfate proteoglycans (HSPGs), syndecan-1 (SDC1), syndecan-1 (SDC2), the low-density lipoprotein receptor (LDLR) and scavenger receptor class B type I (SCARB1). The cholesterol transfer activity of SCARB1 allows E2 exposure and binding of E2 to SCARB1 and the tetraspanin CD81. E1/E2 heterodimer binding on CD81 activates the epithelial growth factor receptor (EGFR) signaling pathway. Diffusion of the complex E1-E2-EGFR-SCARB1-CD81 to the cell lateral membrane allows further interaction with Claudin 1 (CLDN1) and occludin (OCLN) to finally trigger HCV entry. In terms of biological role, forms a heterodimer with envelope glycoprotein E1, which mediates virus attachment to the host cell, virion internalization through clathrin-dependent endocytosis and fusion with host membrane. Fusion with the host cell is most likely mediated by both E1 and E2, through conformational rearrangements of the heterodimer required for fusion rather than a classical class II fusion mechanism. The interaction between envelope glycoprotein E2 and host apolipoprotein E/APOE allows the proper assembly, maturation and infectivity of the viral particles. This interaction is probably promoted via the up-regulation of cellular autophagy by the virus. E1/E2 heterodimer binds host apolipoproteins such as APOB and APOE thereby forming a lipo-viro-particle (LVP). APOE associated to the LVP allows the initial virus attachment to cell surface receptors such as the heparan sulfate proteoglycans (HSPGs), syndecan-1 (SDC1), syndecan-1 (SDC2), the low-density lipoprotein receptor (LDLR) and scavenger receptor class B type I (SCARB1). The cholesterol transfer activity of SCARB1 allows E2 exposure and binding of E2 to SCARB1 and the tetraspanin CD81. E1/E2 heterodimer binding on CD81 activates the epithelial growth factor receptor (EGFR) signaling pathway. Diffusion of the complex E1-E2-EGFR-SCARB1-CD81 to the cell lateral membrane allows further interaction with Claudin 1 (CLDN1) and occludin (OCLN) to finally trigger HCV entry. Inhibits host EIF2AK2/PKR activation, preventing the establishment of an antiviral state. Viral ligand for CD209/DC-SIGN and CLEC4M/DC-SIGNR, which are respectively found on dendritic cells (DCs), and on liver sinusoidal endothelial cells and macrophage-like cells of lymph node sinuses. These interactions allow the capture of circulating HCV particles by these cells and subsequent facilitated transmission to permissive cells such as hepatocytes and lymphocyte subpopulations. The interaction between E2 and host amino acid transporter complex formed by SLC3A2 and SLC7A5/LAT1 may facilitate viral entry into host cell. Its function is as follows. Ion channel protein that acts as a viroporin and plays an essential role in the assembly, envelopment and secretion of viral particles. Regulates the host cell secretory pathway, which induces the intracellular retention of viral glycoproteins and favors assembly of viral particles. Creates a pore in acidic organelles and releases Ca(2+) and H(+) in the cytoplasm of infected cells, leading to a productive viral infection. High levels of cytoplasmic Ca(2+) may trigger membrane trafficking and transport of viral ER-associated proteins to viroplasms, sites of viral genome replication. This ionic imbalance induces the assembly of the inflammasome complex, which triggers the maturation of pro-IL-1beta into IL-1beta through the action of caspase-1. Targets also host mitochondria and induces mitochondrial depolarization. In addition of its role as a viroporin, acts as a lipid raft adhesion factor. Functionally, cysteine protease required for the proteolytic auto-cleavage between the non-structural proteins NS2 and NS3. The N-terminus of NS3 is required for the function of NS2 protease (active region NS2-3). Promotes the initiation of viral particle assembly by mediating the interaction between structural and non-structural proteins. Displays three enzymatic activities: serine protease with a chymotrypsin-like fold, NTPase and RNA helicase. NS3 serine protease, in association with NS4A, is responsible for the cleavages of NS3-NS4A, NS4A-NS4B, NS4B-NS5A and NS5A-NS5B. The NS3/NS4A complex prevents phosphorylation of host IRF3, thus preventing the establishment of dsRNA induced antiviral state. The NS3/NS4A complex induces host amino acid transporter component SLC3A2, thus contributing to HCV propagation. NS3 RNA helicase binds to RNA and unwinds both dsDNA and dsRNA in the 3' to 5' direction, and likely resolves RNA complicated stable secondary structures in the template strand. Binds a single ATP and catalyzes the unzipping of a single base pair of dsRNA. Inhibits host antiviral proteins TBK1 and IRF3 thereby preventing the establishment of an antiviral state. Cleaves host MAVS/CARDIF thereby preventing the establishment of an antiviral state. Cleaves host TICAM1/TRIF, thereby disrupting TLR3 signaling and preventing the establishment of an antiviral state. In terms of biological role, peptide cofactor which forms a non-covalent complex with the N-terminal of NS3 serine protease. The NS3/NS4A complex prevents phosphorylation of host IRF3, thus preventing the establishment of dsRNA induced antiviral state. The NS3/NS4A complex induces host amino acid transporter component SLC3A2, thus contributing to HCV propagation. Its function is as follows. Induces a specific membrane alteration that serves as a scaffold for the virus replication complex. This membrane alteration gives rise to the so-called ER-derived membranous web that contains the replication complex. NS4B self-interaction contributes to its function in membranous web formation. Promotes host TRIF protein degradation in a CASP8-dependent manner thereby inhibiting host TLR3-mediated interferon signaling. Disrupts the interaction between STING and TBK1 contributing to the inhibition of interferon signaling. Functionally, phosphorylated protein that is indispensable for viral replication and assembly. Both hypo- and hyperphosphorylated states are required for the viral life cycle. The hyperphosphorylated form of NS5A is an inhibitor of viral replication. Involved in RNA-binding and especially in binding to the viral genome. Zinc is essential for RNA-binding. Participates in the viral particle production as a result of its interaction with the mature viral core protein. Its interaction with host VAPB may target the viral replication complex to vesicles. Down-regulates viral IRES translation initiation. Mediates interferon resistance, presumably by interacting with and inhibiting host EIF2AK2/PKR. Prevents BIN1-induced apoptosis. Acts as a transcriptional activator of some host genes important for viral replication when localized in the nucleus. Via the interaction with host PACSIN2, modulates lipid droplet formation in order to promote virion assembly. Modulates TNFRSF21/DR6 signaling pathway for viral propagation. RNA-dependent RNA polymerase that performs primer-template recognition and RNA synthesis during viral replication. Initiates RNA transcription/replication at a flavin adenine dinucleotide (FAD), resulting in a 5'- FAD cap on viral RNAs. In this way, recognition of viral 5' RNA by host pattern recognition receptors can be bypassed, thereby evading activation of antiviral pathways. This Homo sapiens (Human) protein is Genome polyprotein.